The chain runs to 460 residues: Argininosuccinate lyase (460 aa).

Belongs to the lyase 1 family. Argininosuccinate lyase subfamily.

The protein localises to the cytoplasm. It carries out the reaction 2-(N(omega)-L-arginino)succinate = fumarate + L-arginine. It participates in amino-acid biosynthesis; L-arginine biosynthesis; L-arginine from L-ornithine and carbamoyl phosphate: step 3/3. The protein is Argininosuccinate lyase of Nitratidesulfovibrio vulgaris (strain DSM 19637 / Miyazaki F) (Desulfovibrio vulgaris).